The chain runs to 443 residues: Threonine/serine transporter TdcC (443 aa).

A run of 11 helical transmembrane segments spans residues 22–42 (TTWT…FFPI), 44–64 (AGFG…PIAF), 97–117 (GVVI…IYGV), 140–160 (FVAL…KDLM), 163–183 (VMSY…LSLI), 207–227 (ILVT…FSPI), 259–279 (ASML…FTLS), 319–339 (ASII…LGTL), 366–386 (ISMI…PNIL), 389–409 (IEAM…MYAI), and 423–443 (DNVF…YKLF).

Belongs to the amino acid/polyamine transporter 2 family. SdaC/TdcC subfamily.

It localises to the cell inner membrane. It catalyses the reaction L-threonine(in) + H(+)(in) = L-threonine(out) + H(+)(out). It carries out the reaction L-serine(in) + H(+)(in) = L-serine(out) + H(+)(out). Functionally, involved in the import of threonine and serine into the cell, with the concomitant import of a proton (symport system). This is Threonine/serine transporter TdcC from Salmonella newport (strain SL254).